A 476-amino-acid polypeptide reads, in one-letter code: Angiotensinogen (476 aa).

Positions Met-1–Gly-24 are cleaved as a signal peptide. An intrachain disulfide couples Cys-42 to Cys-161. The segment at Leu-45–Gln-64 is disordered. Asn-295 carries N-linked (GlcNAc...) asparagine glycosylation.

The protein belongs to the serpin family. Post-translationally, in response to low blood pressure, the enzyme renin/REN cleaves angiotensinogen to produce angiotensin-1. Angiotensin-1 is a substrate of ACE (angiotensin converting enzyme) that removes a dipeptide to yield the physiologically active peptide angiotensin-2. Angiotensin-1 and angiotensin-2 can be further processed to generate angiotensin-3, angiotensin-4. Angiotensin 1-9 is cleaved from angiotensin-1 by ACE2 and can be further processed by ACE to produce angiotensin 1-7, angiotensin 1-5 and angiotensin 1-4. Angiotensin 1-7 has also been proposed to be cleaved from angiotensin-2 by ACE2 or from angiotensin-1 by MME (neprilysin). In terms of processing, the disulfide bond is labile. Angiotensinogen is present in the circulation in a near 40:60 ratio with the oxidized disulfide-bonded form, which preferentially interacts with receptor-bound renin.

It is found in the secreted. Its function is as follows. Essential component of the renin-angiotensin system (RAS), a potent regulator of blood pressure, body fluid and electrolyte homeostasis. In terms of biological role, acts directly on vascular smooth muscle as a potent vasoconstrictor, affects cardiac contractility and heart rate through its action on the sympathetic nervous system, and alters renal sodium and water absorption through its ability to stimulate the zona glomerulosa cells of the adrenal cortex to synthesize and secrete aldosterone. Acts by binding to angiotensin receptors AGTR1 and AGTR2. Also binds the DEAR/FBXW7-AS1 receptor. Functionally, stimulates aldosterone release. Is a ligand for the G-protein coupled receptor MAS1. Has vasodilator and antidiuretic effects. Has an antithrombotic effect that involves MAS1-mediated release of nitric oxide from platelets. The protein is Angiotensinogen (AGT) of Ovis aries (Sheep).